Consider the following 131-residue polypeptide: MEVDCRVISRGKGRGPVLVSTEPLSFLGGVDPGTGRVIDQKHPLHGRSIRGKVLLIPGGKGSTVGSYVIFQMAKNETAPAAIICLNAEPIIATGAIMAGIPMVDRPSEDLLGLLEDSMEVEVDADEGKIRF.

Serine 62 acts as the Proton acceptor in catalysis.

Belongs to the AcnX type II small subunit family. Heterodimer composed of a large subunit (PMDh-L) and a small subunit (PMDh-S).

It carries out the reaction (R)-5-phosphomevalonate = (2E)-3-methyl-5-phosphooxypent-2-enoate + H2O. The protein operates within isoprenoid biosynthesis; isopentenyl diphosphate biosynthesis via mevalonate pathway. Component of a hydro-lyase that catalyzes the dehydration of mevalonate 5-phosphate (MVA5P) to form trans-anhydromevalonate 5-phosphate (tAHMP). Involved in the archaeal mevalonate (MVA) pathway, which provides fundamental precursors for isoprenoid biosynthesis, such as isopentenyl diphosphate (IPP) and dimethylallyl diphosphate (DMAPP). The polypeptide is Phosphomevalonate dehydratase small subunit (Methanothermobacter thermautotrophicus (strain ATCC 29096 / DSM 1053 / JCM 10044 / NBRC 100330 / Delta H) (Methanobacterium thermoautotrophicum)).